The sequence spans 190 residues: A-type ATP synthase subunit E (190 aa).

It belongs to the V-ATPase E subunit family. Has multiple subunits with at least A(3), B(3), C, D, E, F, H, I and proteolipid K(x).

The protein localises to the cell membrane. In terms of biological role, component of the A-type ATP synthase that produces ATP from ADP in the presence of a proton gradient across the membrane. The chain is A-type ATP synthase subunit E from Pyrobaculum neutrophilum (strain DSM 2338 / JCM 9278 / NBRC 100436 / V24Sta) (Thermoproteus neutrophilus).